The primary structure comprises 441 residues: MTTLNIQAIQQDSLIKSLKNYEEIFWFQPEPTPIEQGLKRTSLTLADIQDAEARLTRFAPYLEKVFPELRSTQGKIESEIVSIPTMQHDCSKRFAIEPNGTWWLKKDSHLPISGSIKARGGIYEVLAHAEKLALKAGLVTLQDNYSQLDSDQARQFFSNYQIAVGSTGNLGLSIGIMSAKLGFRVSVHMSADARQWKKDKLRSLGVNVVEYASDYGVAVEQGRKAAESDPNCFFIDDENSTTLFLGYAVAGLRLKQQLIDQNIQVDAEHPLFVYLPCGVGGGPGGVSFGLKHALGEHVHCIFAEPTHSPCMLLGVYTGLHDQICVADIGLDNATAADGLAVGRASGFVGRAMQDLIDGYYTISDQHLFEFIRLMDQTQSIQLEPSAVAGVLGIYHVNTNKSYQQAYHLNAIQLKNATHLIWATGGGMVPPNEMQKYLKQCE.

Residue Lys-117 is modified to N6-(pyridoxal phosphate)lysine.

The protein belongs to the serine/threonine dehydratase family. DsdA subfamily. It depends on pyridoxal 5'-phosphate as a cofactor.

The catalysed reaction is D-serine = pyruvate + NH4(+). The chain is Probable D-serine dehydratase from Acinetobacter baylyi (strain ATCC 33305 / BD413 / ADP1).